Here is a 74-residue protein sequence, read N- to C-terminus: Exodeoxyribonuclease 7 small subunit (74 aa).

It belongs to the XseB family. Heterooligomer composed of large and small subunits.

Its subcellular location is the cytoplasm. The catalysed reaction is Exonucleolytic cleavage in either 5'- to 3'- or 3'- to 5'-direction to yield nucleoside 5'-phosphates.. Its function is as follows. Bidirectionally degrades single-stranded DNA into large acid-insoluble oligonucleotides, which are then degraded further into small acid-soluble oligonucleotides. The sequence is that of Exodeoxyribonuclease 7 small subunit from Bdellovibrio bacteriovorus (strain ATCC 15356 / DSM 50701 / NCIMB 9529 / HD100).